A 327-amino-acid polypeptide reads, in one-letter code: Methionyl-tRNA formyltransferase (327 aa).

Position 111 to 114 (111 to 114 (SLLP)) interacts with (6S)-5,6,7,8-tetrahydrofolate.

This sequence belongs to the Fmt family.

The catalysed reaction is L-methionyl-tRNA(fMet) + (6R)-10-formyltetrahydrofolate = N-formyl-L-methionyl-tRNA(fMet) + (6S)-5,6,7,8-tetrahydrofolate + H(+). In terms of biological role, attaches a formyl group to the free amino group of methionyl-tRNA(fMet). The formyl group appears to play a dual role in the initiator identity of N-formylmethionyl-tRNA by promoting its recognition by IF2 and preventing the misappropriation of this tRNA by the elongation apparatus. The chain is Methionyl-tRNA formyltransferase from Synechococcus elongatus (strain ATCC 33912 / PCC 7942 / FACHB-805) (Anacystis nidulans R2).